The sequence spans 212 residues: Ribonuclease HII (212 aa).

Residues 1–206 (MARFGVDEAG…SRDALGAAEQ (206 aa)) form the RNase H type-2 domain. Positions 7, 8, and 100 each coordinate a divalent metal cation.

The protein belongs to the RNase HII family. Mn(2+) serves as cofactor. Mg(2+) is required as a cofactor.

The protein resides in the cytoplasm. The catalysed reaction is Endonucleolytic cleavage to 5'-phosphomonoester.. Functionally, endonuclease that specifically degrades the RNA of RNA-DNA hybrids. This Halobacterium salinarum (strain ATCC 29341 / DSM 671 / R1) protein is Ribonuclease HII.